Here is a 301-residue protein sequence, read N- to C-terminus: Large ribosomal subunit protein uL18 (301 aa).

Basic and acidic residues predominate over residues 257 to 271 (NPERVKSTKKNDKPK). The interval 257-283 (NPERVKSTKKNDKPKRDHKKFYPTKLT) is disordered.

It belongs to the universal ribosomal protein uL18 family. As to quaternary structure, component of the large ribosomal subunit (LSU).

The protein resides in the cytoplasm. The protein localises to the nucleus. Functionally, component of the ribosome, a large ribonucleoprotein complex responsible for the synthesis of proteins in the cell. The small ribosomal subunit (SSU) binds messenger RNAs (mRNAs) and translates the encoded message by selecting cognate aminoacyl-transfer RNA (tRNA) molecules. The large subunit (LSU) contains the ribosomal catalytic site termed the peptidyl transferase center (PTC), which catalyzes the formation of peptide bonds, thereby polymerizing the amino acids delivered by tRNAs into a polypeptide chain. The nascent polypeptides leave the ribosome through a tunnel in the LSU and interact with protein factors that function in enzymatic processing, targeting, and the membrane insertion of nascent chains at the exit of the ribosomal tunnel. The chain is Large ribosomal subunit protein uL18 (RPL5) from Tetrahymena thermophila (strain SB210).